A 125-amino-acid chain; its full sequence is Cytochrome c2 (125 aa).

Residues 1–21 form the signal peptide; it reads MKAIKIAMVGAALVWSASAYA. Residues 23-123 enclose the Cytochrome c domain; that stretch reads GDPVKGEQVF…DVIAFLATQH (101 aa). Heme c contacts are provided by Cys-35, Cys-38, His-39, and Met-101.

Belongs to the cytochrome c family. Binds 1 heme c group covalently per subunit.

Functionally, cytochrome c2 is found mainly in purple, non-sulfur, photosynthetic bacteria where it functions as the electron donor to the oxidized bacteriochlorophyll in the photophosphorylation pathway. However, it may also have a role in the respiratory chain and is found in some non-photosynthetic bacteria. This Rhodomicrobium vannielii (strain ATCC 17100 / DSM 162 / LMG 4299 / NCIMB 10020 / ATH 3.1.1) protein is Cytochrome c2.